The sequence spans 137 residues: Large ribosomal subunit protein eL28 (137 aa).

The residue at position 2 (Ser-2) is an N-acetylserine. Residues Lys-58 and Lys-65 each participate in a glycyl lysine isopeptide (Lys-Gly) (interchain with G-Cter in SUMO2) cross-link. Position 115 is a phosphoserine (Ser-115).

The protein belongs to the eukaryotic ribosomal protein eL28 family. As to quaternary structure, component of the large ribosomal subunit.

Its subcellular location is the cytoplasm. Its function is as follows. Component of the large ribosomal subunit. The ribosome is a large ribonucleoprotein complex responsible for the synthesis of proteins in the cell. This is Large ribosomal subunit protein eL28 (RPL28) from Homo sapiens (Human).